The chain runs to 365 residues: Chorismate synthase (365 aa).

NADP(+) is bound by residues Arg-48 and Arg-54. FMN-binding positions include 131–133 (RSS), 243–244 (NA), Gly-288, 303–307 (KPTSS), and Arg-329.

The protein belongs to the chorismate synthase family. As to quaternary structure, homotetramer. It depends on FMNH2 as a cofactor.

It carries out the reaction 5-O-(1-carboxyvinyl)-3-phosphoshikimate = chorismate + phosphate. It functions in the pathway metabolic intermediate biosynthesis; chorismate biosynthesis; chorismate from D-erythrose 4-phosphate and phosphoenolpyruvate: step 7/7. Catalyzes the anti-1,4-elimination of the C-3 phosphate and the C-6 proR hydrogen from 5-enolpyruvylshikimate-3-phosphate (EPSP) to yield chorismate, which is the branch point compound that serves as the starting substrate for the three terminal pathways of aromatic amino acid biosynthesis. This reaction introduces a second double bond into the aromatic ring system. In Rhizobium leguminosarum bv. trifolii (strain WSM2304), this protein is Chorismate synthase.